We begin with the raw amino-acid sequence, 410 residues long: LL-diaminopimelate aminotransferase (410 aa).

Residues Tyr-15 and Gly-42 each coordinate substrate. Pyridoxal 5'-phosphate contacts are provided by residues Tyr-72, 108–109 (SK), Tyr-132, Asn-187, Tyr-218, and 246–248 (SFS). Residues Lys-109, Tyr-132, and Asn-187 each coordinate substrate. The residue at position 249 (Lys-249) is an N6-(pyridoxal phosphate)lysine. Pyridoxal 5'-phosphate-binding residues include Arg-257 and Asn-292. Substrate-binding residues include Asn-292 and Arg-388.

This sequence belongs to the class-I pyridoxal-phosphate-dependent aminotransferase family. LL-diaminopimelate aminotransferase subfamily. Homodimer. Pyridoxal 5'-phosphate is required as a cofactor.

It catalyses the reaction (2S,6S)-2,6-diaminopimelate + 2-oxoglutarate = (S)-2,3,4,5-tetrahydrodipicolinate + L-glutamate + H2O + H(+). It participates in amino-acid biosynthesis; L-lysine biosynthesis via DAP pathway; LL-2,6-diaminopimelate from (S)-tetrahydrodipicolinate (aminotransferase route): step 1/1. Functionally, involved in the synthesis of meso-diaminopimelate (m-DAP or DL-DAP), required for both lysine and peptidoglycan biosynthesis. Catalyzes the direct conversion of tetrahydrodipicolinate to LL-diaminopimelate. The sequence is that of LL-diaminopimelate aminotransferase from Geotalea daltonii (strain DSM 22248 / JCM 15807 / FRC-32) (Geobacter daltonii).